The following is a 308-amino-acid chain: Tetraacyldisaccharide 4'-kinase (308 aa).

ATP is bound at residue 63 to 70 (SFGGNGKT).

The protein belongs to the LpxK family.

It catalyses the reaction a lipid A disaccharide + ATP = a lipid IVA + ADP + H(+). Its pathway is glycolipid biosynthesis; lipid IV(A) biosynthesis; lipid IV(A) from (3R)-3-hydroxytetradecanoyl-[acyl-carrier-protein] and UDP-N-acetyl-alpha-D-glucosamine: step 6/6. Transfers the gamma-phosphate of ATP to the 4'-position of a tetraacyldisaccharide 1-phosphate intermediate (termed DS-1-P) to form tetraacyldisaccharide 1,4'-bis-phosphate (lipid IVA). This chain is Tetraacyldisaccharide 4'-kinase, found in Campylobacter jejuni subsp. jejuni serotype O:2 (strain ATCC 700819 / NCTC 11168).